Here is a 176-residue protein sequence, read N- to C-terminus: Translation initiation factor IF-3 (176 aa).

This sequence belongs to the IF-3 family. In terms of assembly, monomer.

Its subcellular location is the cytoplasm. IF-3 binds to the 30S ribosomal subunit and shifts the equilibrium between 70S ribosomes and their 50S and 30S subunits in favor of the free subunits, thus enhancing the availability of 30S subunits on which protein synthesis initiation begins. The polypeptide is Translation initiation factor IF-3 (Streptococcus uberis (strain ATCC BAA-854 / 0140J)).